The primary structure comprises 304 residues: uncharacterized protein (304 aa).

An N-terminal signal peptide occupies residues 1-25; that stretch reads MVKTAMLGAVALVIALGGTCGVADA. A GP-PDE domain is found at 34-303; the sequence is PMIVAHRAGT…DSPLAAQQWR (270 aa).

This is an uncharacterized protein from Mycobacterium tuberculosis (strain CDC 1551 / Oshkosh).